A 131-amino-acid chain; its full sequence is Ribonuclease P protein component (131 aa).

The protein belongs to the RnpA family. Consists of a catalytic RNA component (M1 or rnpB) and a protein subunit.

The catalysed reaction is Endonucleolytic cleavage of RNA, removing 5'-extranucleotides from tRNA precursor.. Functionally, RNaseP catalyzes the removal of the 5'-leader sequence from pre-tRNA to produce the mature 5'-terminus. It can also cleave other RNA substrates such as 4.5S RNA. The protein component plays an auxiliary but essential role in vivo by binding to the 5'-leader sequence and broadening the substrate specificity of the ribozyme. This Acinetobacter baylyi (strain ATCC 33305 / BD413 / ADP1) protein is Ribonuclease P protein component.